Consider the following 88-residue polypeptide: HssA/B-like protein 19 (88 aa).

It belongs to the hssA/B family.

The sequence is that of HssA/B-like protein 19 (hssl19) from Dictyostelium discoideum (Social amoeba).